Reading from the N-terminus, the 475-residue chain is Ribulose bisphosphate carboxylase large chain (475 aa).

A propeptide spanning residues 1-2 (MA) is cleaved from the precursor. Pro3 is subject to N-acetylproline. The substrate site is built by Asn123 and Thr173. Lys175 acts as the Proton acceptor in catalysis. Position 177 (Lys177) interacts with substrate. Mg(2+) contacts are provided by Lys201, Asp203, and Glu204. Position 201 is an N6-carboxylysine (Lys201). The active-site Proton acceptor is the His294. Substrate-binding residues include Arg295, His327, and Ser379.

The protein belongs to the RuBisCO large chain family. Type I subfamily. As to quaternary structure, heterohexadecamer of 8 large chains and 8 small chains. It depends on Mg(2+) as a cofactor.

It is found in the plastid. Its subcellular location is the chloroplast. The enzyme catalyses 2 (2R)-3-phosphoglycerate + 2 H(+) = D-ribulose 1,5-bisphosphate + CO2 + H2O. It catalyses the reaction D-ribulose 1,5-bisphosphate + O2 = 2-phosphoglycolate + (2R)-3-phosphoglycerate + 2 H(+). RuBisCO catalyzes two reactions: the carboxylation of D-ribulose 1,5-bisphosphate, the primary event in carbon dioxide fixation, as well as the oxidative fragmentation of the pentose substrate in the photorespiration process. Both reactions occur simultaneously and in competition at the same active site. The chain is Ribulose bisphosphate carboxylase large chain from Ostreococcus tauri.